A 678-amino-acid chain; its full sequence is Ribosome biogenesis protein BOP1 homolog (678 aa).

Basic and acidic residues predominate over residues 1–10 (MGHSDGDHGS). Residues 1-73 (MGHSDGDHGS…VAPRNTIGDV (73 aa)) are disordered. Residues 24-63 (WSDDDDEGSLSFEDSGEGSDAESDEPDAPAVEESDSSEDE) show a composition bias toward acidic residues. 7 WD repeats span residues 343–384 (GHNG…KVWN), 386–424 (GGVV…EDAQ), 463–505 (IHHK…SHHP), 508–548 (KLPG…KKLE), 549–588 (SGVR…RPYK), 592–631 (NHSK…DLNQ), and 647–678 (SDGR…LYCD).

This sequence belongs to the WD repeat BOP1/ERB1 family.

It localises to the nucleus. The protein resides in the nucleolus. The protein localises to the nucleoplasm. Functionally, required for maturation of ribosomal RNAs and formation of the large ribosomal subunit. The chain is Ribosome biogenesis protein BOP1 homolog from Oryza sativa subsp. japonica (Rice).